Consider the following 480-residue polypeptide: Alpha,alpha-trehalose-phosphate synthase [UDP-forming] 2 (480 aa).

Positions 97 and 151 each coordinate D-glucose 6-phosphate. UDP-binding residues include arginine 288 and lysine 293. Positions 288 and 293 each coordinate UDP-alpha-D-glucose. Position 326 (arginine 326) interacts with D-glucose 6-phosphate. 387–395 (DGMNLVSFE) provides a ligand contact to UDP-alpha-D-glucose. A UDP-binding site is contributed by 391–395 (LVSFE).

It belongs to the glycosyltransferase 20 family.

The enzyme catalyses D-glucose 6-phosphate + UDP-alpha-D-glucose = alpha,alpha-trehalose 6-phosphate + UDP + H(+). It functions in the pathway carbohydrate biosynthesis. Its function is as follows. Synthase catalytic subunit of the trehalose synthase complex that catalyzes the production of trehalose from glucose-6-phosphate and UDP-alpha-D-glucose in a two step process. This is Alpha,alpha-trehalose-phosphate synthase [UDP-forming] 2 from Aspergillus niger.